The primary structure comprises 442 residues: D-serine dehydratase (442 aa).

An N6-(pyridoxal phosphate)lysine modification is found at lysine 118.

It belongs to the serine/threonine dehydratase family. DsdA subfamily. As to quaternary structure, monomer. Pyridoxal 5'-phosphate serves as cofactor.

The catalysed reaction is D-serine = pyruvate + NH4(+). This Escherichia coli O81 (strain ED1a) protein is D-serine dehydratase.